Reading from the N-terminus, the 149-residue chain is Endoribonuclease YbeY (149 aa).

His-116, His-120, and His-126 together coordinate Zn(2+).

It belongs to the endoribonuclease YbeY family. The cofactor is Zn(2+).

It is found in the cytoplasm. Its function is as follows. Single strand-specific metallo-endoribonuclease involved in late-stage 70S ribosome quality control and in maturation of the 3' terminus of the 16S rRNA. In Nocardioides sp. (strain ATCC BAA-499 / JS614), this protein is Endoribonuclease YbeY.